The following is a 991-amino-acid chain: KAT8 regulatory NSL complex subunit 1-like protein (991 aa).

K136 participates in a covalent cross-link: Glycyl lysine isopeptide (Lys-Gly) (interchain with G-Cter in SUMO2). The disordered stretch occupies residues 443 to 462; the sequence is VNSQVPQRSEEPLPEHDFEM. Positions 450–461 are enriched in basic and acidic residues; the sequence is RSEEPLPEHDFE. The residue at position 463 (S463) is a Phosphoserine. Positions 749-763 are enriched in polar residues; that stretch reads ANVTSRTQNPSSQNT. A disordered region spans residues 749 to 770; it reads ANVTSRTQNPSSQNTSRRRLRS. Residues 798 to 919 enclose the PEHE domain; it reads EILTPRWRKV…DGQEDKSLRW (122 aa). K863 carries the N6-acetyllysine modification.

Post-translationally, acetylated on lysine residues by KAT8 upon ionizing radiation-induced DNA damage; deacetylated by HDAC3.

This Mus musculus (Mouse) protein is KAT8 regulatory NSL complex subunit 1-like protein (Kansl1l).